The primary structure comprises 459 residues: Probable 3-ketoacyl-CoA synthase 14 (459 aa).

An N-terminal signal peptide occupies residues 1–25; that stretch reads MFIAMADFKLLLLILILLSLFELDL. Residues 32 to 52 form a helical membrane-spanning segment; the sequence is FFSPFPVKIGLLLISIFFYAY. One can recognise an FAE domain in the interval 52–334; the sequence is YSTTRSKPVY…FILFLVKSKL (283 aa). Active-site residues include His268, His352, His356, His385, and Asn389.

Belongs to the thiolase-like superfamily. Chalcone/stilbene synthases family. As to expression, expressed in siliques.

The protein localises to the membrane. The enzyme catalyses a very-long-chain acyl-CoA + malonyl-CoA + H(+) = a very-long-chain 3-oxoacyl-CoA + CO2 + CoA. The protein operates within lipid metabolism; fatty acid biosynthesis. The sequence is that of Probable 3-ketoacyl-CoA synthase 14 from Arabidopsis thaliana (Mouse-ear cress).